We begin with the raw amino-acid sequence, 349 residues long: Sphingomyelinase D (349 aa).

An N-terminal signal peptide occupies residues 1-18 (MLLSSLISLALLSSQVVA). The active site involves H52. Mg(2+) is bound by residues E72, D74, and D123. The short motif at 310–317 (ATNDNNPW) is the SMD-tail element.

This sequence belongs to the sphingomyelinase D/phospholipase D family. Requires Mg(2+) as cofactor.

It localises to the secreted. It catalyses the reaction a sphingomyelin + H2O = an N-acylsphing-4-enine 1-phosphate + choline + H(+). Functionally, catalyzes the hydrolysis of sphingomyelin. Sphingomyelinases D are produced by some spider in their venoms, but also by arthropods such as ticks, or pathogenic bacteria and fungi. They might play a role in pathogenicity through different mechanisms, such as membrane destabilization and host cell penetration, but also pulmonary inflammation and cutaneous lesions. The polypeptide is Sphingomyelinase D (Uncinocarpus reesii (strain UAMH 1704)).